The following is a 184-amino-acid chain: Putative F-box protein At4g22420 (184 aa).

One can recognise an F-box domain in the interval 1 to 46 (MAECPTDLINEMFLRLRATTLKKCRVLSKPCFSLIDSPEKRVIERS). The interval 68–126 (DDDEEEGNELKKSQARRNGVAKGEGNGNKVNGEAQEEVDDEEDDDDDASKGRGKHSRHV) is disordered. Residues 85-100 (NGVAKGEGNGNKVNGE) are compositionally biased toward low complexity. Positions 101–114 (AQEEVDDEEDDDDD) are enriched in acidic residues.

This chain is Putative F-box protein At4g22420, found in Arabidopsis thaliana (Mouse-ear cress).